The following is a 255-amino-acid chain: Triosephosphate isomerase (255 aa).

9–11 serves as a coordination point for substrate; the sequence is NWK. Catalysis depends on His-95, which acts as the Electrophile. Residue Glu-167 is the Proton acceptor of the active site. Substrate is bound by residues Gly-173, Ser-212, and 233 to 234; that span reads GG.

Belongs to the triosephosphate isomerase family. As to quaternary structure, homodimer.

Its subcellular location is the cytoplasm. It carries out the reaction D-glyceraldehyde 3-phosphate = dihydroxyacetone phosphate. The protein operates within carbohydrate biosynthesis; gluconeogenesis. It functions in the pathway carbohydrate degradation; glycolysis; D-glyceraldehyde 3-phosphate from glycerone phosphate: step 1/1. Its function is as follows. Involved in the gluconeogenesis. Catalyzes stereospecifically the conversion of dihydroxyacetone phosphate (DHAP) to D-glyceraldehyde-3-phosphate (G3P). This Erwinia tasmaniensis (strain DSM 17950 / CFBP 7177 / CIP 109463 / NCPPB 4357 / Et1/99) protein is Triosephosphate isomerase.